Reading from the N-terminus, the 723-residue chain is Zinc finger CCCH domain-containing protein 11A (723 aa).

3 consecutive C3H1-type zinc fingers follow at residues 2-29, 31-57, and 60-87; these read SKQGDDCYFYFYSTCNKGDNCPFRHCEA, LGNETICTLWKEGRCFRNVCRFRHMEI, and KRSEIPCFWENQPGGCQKSNCAFHHTKG. 5 disordered regions span residues 142–208, 223–256, 404–428, 450–526, and 565–681; these read ENSE…KQDD, KKQKEKTKKQSEGPSGVPAHPLQSRTVPVPEKEN, KRAEGERKKQRILPPSVPGKVKLEE, EKAL…VKSL, and VKPS…APLS. Residues 160-175 show a composition bias toward acidic residues; it reads ADDDEDDDDQLSEEGE. A coiled-coil region spans residues 376 to 411; it reads KTFSEALAERKQRRLEEEKQKLEEFLTEKRAEGERK. Residues 511–522 are compositionally biased toward polar residues; sequence PSNQSAPNSKAQ. The segment covering 609 to 620 has biased composition (low complexity); that stretch reads KKAALTAAPALP. Over residues 637-649 the composition is skewed to polar residues; sequence LELQLGSQADSVE. Over residues 650 to 672 the composition is skewed to low complexity; sequence QSGDSSSASASSQSVAKAQQLSS.

It localises to the nucleus speckle. Functionally, through its association with TREX complex components, may participate in the export and post-transcriptional coordination of selected mRNA transcripts. Binds RNA. The polypeptide is Zinc finger CCCH domain-containing protein 11A (ZC3H11A) (Gallus gallus (Chicken)).